Reading from the N-terminus, the 224-residue chain is Cytidylate kinase (224 aa).

ATP is bound at residue 11-19 (GPAGAGKST).

It belongs to the cytidylate kinase family. Type 1 subfamily.

It localises to the cytoplasm. The enzyme catalyses CMP + ATP = CDP + ADP. It carries out the reaction dCMP + ATP = dCDP + ADP. The protein is Cytidylate kinase of Exiguobacterium sp. (strain ATCC BAA-1283 / AT1b).